We begin with the raw amino-acid sequence, 404 residues long: Phosphopentomutase (404 aa).

The Mn(2+) site is built by Asp-10, Asp-303, His-308, Asp-344, His-345, and His-356.

This sequence belongs to the phosphopentomutase family. Mn(2+) serves as cofactor.

The protein localises to the cytoplasm. It catalyses the reaction 2-deoxy-alpha-D-ribose 1-phosphate = 2-deoxy-D-ribose 5-phosphate. The catalysed reaction is alpha-D-ribose 1-phosphate = D-ribose 5-phosphate. It participates in carbohydrate degradation; 2-deoxy-D-ribose 1-phosphate degradation; D-glyceraldehyde 3-phosphate and acetaldehyde from 2-deoxy-alpha-D-ribose 1-phosphate: step 1/2. Its function is as follows. Isomerase that catalyzes the conversion of deoxy-ribose 1-phosphate (dRib-1-P) and ribose 1-phosphate (Rib-1-P) to deoxy-ribose 5-phosphate (dRib-5-P) and ribose 5-phosphate (Rib-5-P), respectively. The sequence is that of Phosphopentomutase from Shewanella sp. (strain ANA-3).